Here is a 179-residue protein sequence, read N- to C-terminus: Small ribosomal subunit protein eS10x (179 aa).

Residues 90 to 179 (TLKKSAKPGG…AAAPSGSGLP (90 aa)) are disordered. A compositionally biased stretch (basic and acidic residues) spans 108-129 (DRSRGPRHEGGDRPRFGDRDGY). Residues 134–144 (RAGGEFGGEKG) show a composition bias toward gly residues. Residues 145–156 (GAPADYQPSFQG) are compositionally biased toward low complexity. Positions 157-167 (SGRGFGRGAGG) are enriched in gly residues. Residues 168–179 (YSAAAPSGSGLP) show a composition bias toward low complexity.

The protein belongs to the eukaryotic ribosomal protein eS10 family.

Its subcellular location is the cytoplasm. In Arabidopsis thaliana (Mouse-ear cress), this protein is Small ribosomal subunit protein eS10x (RPS10C).